The primary structure comprises 434 residues: Methylenetetrahydrofolate--tRNA-(uracil-5-)-methyltransferase TrmFO (434 aa).

An FAD-binding site is contributed by 9-14 (GAGLAG).

Belongs to the MnmG family. TrmFO subfamily. FAD serves as cofactor.

It is found in the cytoplasm. It catalyses the reaction uridine(54) in tRNA + (6R)-5,10-methylene-5,6,7,8-tetrahydrofolate + NADH + H(+) = 5-methyluridine(54) in tRNA + (6S)-5,6,7,8-tetrahydrofolate + NAD(+). The enzyme catalyses uridine(54) in tRNA + (6R)-5,10-methylene-5,6,7,8-tetrahydrofolate + NADPH + H(+) = 5-methyluridine(54) in tRNA + (6S)-5,6,7,8-tetrahydrofolate + NADP(+). Its function is as follows. Catalyzes the folate-dependent formation of 5-methyl-uridine at position 54 (M-5-U54) in all tRNAs. The chain is Methylenetetrahydrofolate--tRNA-(uracil-5-)-methyltransferase TrmFO from Listeria monocytogenes serotype 4b (strain F2365).